A 404-amino-acid chain; its full sequence is Serine/threonine transporter SstT (404 aa).

The next 9 membrane-spanning stretches (helical) occupy residues 17 to 37, 44 to 64, 75 to 95, 138 to 158, 179 to 199, 212 to 232, 287 to 307, 319 to 339, and 354 to 374; these read IGIGVVIGLLLGILLPDVTAI, FVGALKAIAPLLVFALVVQAI, MTLIIVLYLLGTFLAALVAVI, ALATANYIGVLAWALIFGLAL, IVVWIINVAPIGIMGLVFSTV, LLILVLVGTMLFVALVVNPLL, IPLGAMINMGGAAITINVLTL, FLTALLLSVVAAISACGASGV, and FGISSDLAMQVVGVGFIVGVI.

It belongs to the dicarboxylate/amino acid:cation symporter (DAACS) (TC 2.A.23) family.

It is found in the cell membrane. It carries out the reaction L-serine(in) + Na(+)(in) = L-serine(out) + Na(+)(out). The catalysed reaction is L-threonine(in) + Na(+)(in) = L-threonine(out) + Na(+)(out). Involved in the import of serine and threonine into the cell, with the concomitant import of sodium (symport system). This is Serine/threonine transporter SstT from Streptococcus equi subsp. zooepidemicus (strain H70).